Here is a 252-residue protein sequence, read N- to C-terminus: Chitooligosaccharide deacetylase (252 aa).

Mg(2+) is bound by residues His-61 and His-125.

It belongs to the YdjC deacetylase family. ChbG subfamily. In terms of assembly, homodimer. Requires Mg(2+) as cofactor.

The protein resides in the cytoplasm. The enzyme catalyses N,N'-diacetylchitobiose + H2O = N-acetyl-beta-D-glucosaminyl-(1-&gt;4)-D-glucosamine + acetate. It carries out the reaction diacetylchitobiose-6'-phosphate + H2O = N'-monoacetylchitobiose-6'-phosphate + acetate. It participates in glycan degradation; chitin degradation. Functionally, involved in the degradation of chitin. ChbG is essential for growth on the acetylated chitooligosaccharides chitobiose and chitotriose but is dispensable for growth on cellobiose and chitosan dimer, the deacetylated form of chitobiose. Deacetylation of chitobiose-6-P and chitotriose-6-P is necessary for both the activation of the chb promoter by the regulatory protein ChbR and the hydrolysis of phosphorylated beta-glucosides by the phospho-beta-glucosidase ChbF. Catalyzes the removal of only one acetyl group from chitobiose-6-P to yield monoacetylchitobiose-6-P, the inducer of ChbR and the substrate of ChbF. The polypeptide is Chitooligosaccharide deacetylase (Escherichia coli O139:H28 (strain E24377A / ETEC)).